Reading from the N-terminus, the 226-residue chain is MTQQLTWHDVIGAEKEQSYFQQTLNFVEAERQAGKVIYPPAKDVFNAFRYTEFQDVKVVILGQDPYHGPNQAHGLCFSVLPGIKTPPSLVNMYKELAQDIQGFQIPAHGYLEAWAKQGVLLLNTVLTVEQGKAHSHASLGWETFTDKVIEAINQHQQGVVFLLWGSHAQKKGRFIDRHKHVVLTAPHPSPLSAHRGFLGCKHFSQANQHLLDQGKQAIDWQLPLSL.

Catalysis depends on D64, which acts as the Proton acceptor.

This sequence belongs to the uracil-DNA glycosylase (UDG) superfamily. UNG family.

It localises to the cytoplasm. It catalyses the reaction Hydrolyzes single-stranded DNA or mismatched double-stranded DNA and polynucleotides, releasing free uracil.. Functionally, excises uracil residues from the DNA which can arise as a result of misincorporation of dUMP residues by DNA polymerase or due to deamination of cytosine. This Vibrio vulnificus (strain CMCP6) protein is Uracil-DNA glycosylase.